The primary structure comprises 273 residues: Methylthioribulose-1-phosphate dehydratase (273 aa).

Positions 1–27 are disordered; that stretch reads MCPTCPPSAASASSENNNTDNNDHLVL. C114 serves as a coordination point for substrate. H132 and H134 together coordinate Zn(2+). Residue E168 is the Proton donor/acceptor of the active site. Zn(2+) is bound at residue H225.

The protein belongs to the aldolase class II family. MtnB subfamily. It depends on Zn(2+) as a cofactor.

The protein localises to the cytoplasm. The enzyme catalyses 5-(methylsulfanyl)-D-ribulose 1-phosphate = 5-methylsulfanyl-2,3-dioxopentyl phosphate + H2O. The protein operates within amino-acid biosynthesis; L-methionine biosynthesis via salvage pathway; L-methionine from S-methyl-5-thio-alpha-D-ribose 1-phosphate: step 2/6. Its function is as follows. Catalyzes the dehydration of methylthioribulose-1-phosphate (MTRu-1-P) into 2,3-diketo-5-methylthiopentyl-1-phosphate (DK-MTP-1-P). In Sordaria macrospora (strain ATCC MYA-333 / DSM 997 / K(L3346) / K-hell), this protein is Methylthioribulose-1-phosphate dehydratase.